We begin with the raw amino-acid sequence, 695 residues long: NADPH--cytochrome P450 reductase (695 aa).

The Lumenal segment spans residues Met-1–Asp-8. The helical transmembrane segment at Leu-9–Val-31 threads the bilayer. The Cytoplasmic portion of the chain corresponds to Pro-32 to Ser-695. One can recognise a Flavodoxin-like domain in the interval Cys-66 to Trp-221. FMN is bound by residues Ser-72–Ala-77, Ala-123–Gly-126, Leu-169–Gln-178, and Asp-204. The FAD-binding FR-type domain maps to His-277 to Pro-538. Arg-296 lines the NADP(+) pocket. FAD-binding positions include Arg-451–Ser-454, Thr-469–Val-471, and Gly-486–Thr-489. Residues Thr-552, Ser-614–Arg-615, Lys-620–Gln-624, and Glu-656 each bind NADP(+). Position 694 (Trp-694) interacts with FAD.

This sequence belongs to the NADPH--cytochrome P450 reductase family. The protein in the N-terminal section; belongs to the flavodoxin family. In the C-terminal section; belongs to the flavoprotein pyridine nucleotide cytochrome reductase family. The cofactor is FAD. It depends on FMN as a cofactor.

Its subcellular location is the endoplasmic reticulum membrane. The protein localises to the mitochondrion outer membrane. It localises to the cell membrane. The catalysed reaction is 2 oxidized [cytochrome P450] + NADPH = 2 reduced [cytochrome P450] + NADP(+) + H(+). This enzyme is required for electron transfer from NADP to cytochrome P450 in microsomes. It can also provide electron transfer to heme oxygenase and cytochrome B5. Involved in ergosterol biosynthesis. The sequence is that of NADPH--cytochrome P450 reductase from Aspergillus terreus (strain NIH 2624 / FGSC A1156).